Reading from the N-terminus, the 861-residue chain is MKPNKPRYIACSHCSKAKARCDRKVPCSRCVSKQLVCHPRSARRAIHTPTEQHLRWLEPGDVPRRDEQQTILLAQQTPVDADNTMVTGTHMRPDSPDVSSQLQSTGASYISADKMTHLSTEWLHQITPESSMHMPLNVPLDQDVTHQSSPDLDLINELIGYPACDDLGTTYMEFVGIGPTDSPPLSPSRDGRSVKDRNSRLVALCPGHPRHWSEDFSSQMRISMQRFEQTINLRQPWTTSCSETWASLPYPSVMNPITETTRDSLVAVSQLLLLQTRSIHLWENGRNSRRLSSGNLAVLNLPPAKVLDSLLRAYTSCFDQYFGLLSSELQDPNDIMTHPEHDLKAAGILLLLMIAIGATANPEPKMHIFAIGMAEMCRTALCDLMEDEVPNTRPDILSHCALLLLYLGMWSGERWLMRIICAHRQIYTQLLHRCPLSFNTNDSLQKLHGGLNLSQQWQHWKEQEMQSRLTYAWMVTDQEWSLVYDTPSNFSVDMMTQSLPNSERLWRATSEGDWAALAPEMFGTQAPTCLRDLYTSFMNHELRPGRSTLPLQYLRLLLVPLHGMVFHLRQWLQSFPNCPVRWRKNNQGLSNPAIHAQLDQVQALLPEWYDLAIHLTNTSPAFVSMLVMYHLIALNAMASFPNIEDALLRGPLDRSQLPNPRGSDPCPLGTCQSTVAEDSAEEALVHCGQILRLVRLMPPSDQPLWWSAVVYRIALITIFLSIKRHPHHWLPAVMLGQMVQDTASSSGTSTDGSGVSLMSNPLFTDRVDAQPHHRPVILNNVAPNDNELLQFTKYREGEPCLAVRDGQLIELRQPRDVMSFFIDLVDGGHLPALHATNFQASVKDSLERLADRWGFLSLHKT.

Residues 11 to 37 (CSHCSKAKARCDRKVPCSRCVSKQLVC) constitute a DNA-binding region (zn(2)-C6 fungal-type).

It localises to the nucleus. Its function is as follows. Transcription factor that positively regulates the gene cluster that mediates the biosynthesis of oxopyrrolidines, polyketide-amino acid hybrid compounds with feature structures of tetramic acid. The protein is Transcription factor opdJ of Penicillium oxalicum (strain 114-2 / CGMCC 5302) (Penicillium decumbens).